The chain runs to 155 residues: uncharacterized protein (155 aa).

Disordered regions lie at residues 1 to 22 and 108 to 155; these read MSSQ…TFTF and PFNK…DTQA. S2 is subject to N-acetylserine. Phosphoserine occurs at positions 136, 144, and 146. Residues 136–155 show a composition bias toward acidic residues; the sequence is SDEDLDAESDSEGEDEDTQA.

This is an uncharacterized protein from Rattus norvegicus (Rat).